Here is a 534-residue protein sequence, read N- to C-terminus: MSVKYIFVTGGVVSGLGKGITAASLGRLLKARGVHVTIQKFDPYINVDPGTMSPYQHGEVFVTEDGAETDLDLGHYERFIDENLSKNSNITTGKIYWSVISKERKGDYLGGTVQVIPHITNEIKDRIYRVGKSERTDVVITEIGGTVGDIESLPFLESIRQVSNEVGRENVMYIHVTLVPYLGISGELKTKPTQHSVKELRSIGIQPDVIVCRTEKYLSQDMKEKLSLFCNVPEGAVVQNLDAEVLYEVPLMLEKEGLAKIVCKRLGLECKEPDLDEWEEMVRRQKNPKSSVTIGLVGKYVELHDAYLSVAESLRHGGIGNDVEVDIRWVNSEEIENGEVNSFLQGVDGILVPGGFGDRGIEGKINAITFARENKIPFFGICLGMQMAVVEFARNVAGLHDANSSEFGETPYPVIDLMPEQREVDEMGGTMRLGVYPCKINENTLIKGIFEDELIYERHRHRYEFNNEFRDTFIKNGMTLSGLSPSGKLVETIELKDHPWFVGVQFHPEFKSRPNKPHPLFKDFVRAAYEYKTK.

Residues 1-268 (MSVKYIFVTG…AKIVCKRLGL (268 aa)) form an amidoligase domain region. Residue S14 coordinates CTP. Residue S14 coordinates UTP. ATP is bound at residue 15–20 (GLGKGI). Y55 is a binding site for L-glutamine. D72 is an ATP binding site. Mg(2+)-binding residues include D72 and E142. CTP-binding positions include 149 to 151 (DIE), 189 to 194 (KTKPTQ), and K225. Residues 189–194 (KTKPTQ) and K225 contribute to the UTP site. Positions 293 to 534 (TIGLVGKYVE…VRAAYEYKTK (242 aa)) constitute a Glutamine amidotransferase type-1 domain. G355 contacts L-glutamine. C382 acts as the Nucleophile; for glutamine hydrolysis in catalysis. Residues 383–386 (LGMQ), E406, and R462 contribute to the L-glutamine site. Catalysis depends on residues H507 and E509.

This sequence belongs to the CTP synthase family. Homotetramer.

The catalysed reaction is UTP + L-glutamine + ATP + H2O = CTP + L-glutamate + ADP + phosphate + 2 H(+). It carries out the reaction L-glutamine + H2O = L-glutamate + NH4(+). It catalyses the reaction UTP + NH4(+) + ATP = CTP + ADP + phosphate + 2 H(+). It participates in pyrimidine metabolism; CTP biosynthesis via de novo pathway; CTP from UDP: step 2/2. Allosterically activated by GTP, when glutamine is the substrate; GTP has no effect on the reaction when ammonia is the substrate. The allosteric effector GTP functions by stabilizing the protein conformation that binds the tetrahedral intermediate(s) formed during glutamine hydrolysis. Inhibited by the product CTP, via allosteric rather than competitive inhibition. In terms of biological role, catalyzes the ATP-dependent amination of UTP to CTP with either L-glutamine or ammonia as the source of nitrogen. Regulates intracellular CTP levels through interactions with the four ribonucleotide triphosphates. The sequence is that of CTP synthase from Ruminiclostridium cellulolyticum (strain ATCC 35319 / DSM 5812 / JCM 6584 / H10) (Clostridium cellulolyticum).